Here is a 419-residue protein sequence, read N- to C-terminus: L-rhamnose isomerase (419 aa).

Residues His262, Asp294, and Asp296 each coordinate Mn(2+).

This sequence belongs to the rhamnose isomerase family. In terms of assembly, homotetramer. The cofactor is Mn(2+).

It localises to the cytoplasm. The enzyme catalyses L-rhamnopyranose = L-rhamnulose. It functions in the pathway carbohydrate degradation; L-rhamnose degradation; glycerone phosphate from L-rhamnose: step 1/3. Functionally, catalyzes the interconversion of L-rhamnose and L-rhamnulose. The sequence is that of L-rhamnose isomerase from Escherichia fergusonii (strain ATCC 35469 / DSM 13698 / CCUG 18766 / IAM 14443 / JCM 21226 / LMG 7866 / NBRC 102419 / NCTC 12128 / CDC 0568-73).